Here is a 77-residue protein sequence, read N- to C-terminus: Apelin (77 aa).

Positions 1–22 (MNVKILTLVIVLVVSLLCSASA) are cleaved as a signal peptide. The disordered stretch occupies residues 21 to 77 (SAGPMASTEHSKEIEEVGSMRTPLRQNPARAGRSQRPAGWRRRRPRPRLSHKGPMPF). Residues 59–71 (GWRRRRPRPRLSH) show a composition bias toward basic residues.

This sequence belongs to the apelin family.

It is found in the secreted. The protein localises to the extracellular space. Functionally, peptide hormone that functions as endogenous ligand for the G-protein-coupled apelin receptor (aplnra and/or aplnrb), that plays a role in cadiovascular homeostasis. Functions as a balanced agonist activating both G(i) protein pathway and beta-arrestin pathway of APLNR. Downstream G proteins activation, apelin can inhibit cAMP production and activate key intracellular effectors such as ERKs. On the other hand, APLNR activation induces beta-arrestin recruitment to the membrane leading to desensitization and internalization of the receptor. Apelin blunts cardiac hypertrophic induction from APLNR on response to pathological stimuli, but also induces myocardial hypertrophy under normal conditions. Involved in the regulation of cardiac precursor cell movements during gastrulation and heart morphogenesis. Plays a role in early coronary blood vessels formation. Mediates myocardial contractility in an ERK1/2-dependent manner. May also have a role in the central control of body fluid homeostasis. This Danio rerio (Zebrafish) protein is Apelin.